Consider the following 107-residue polypeptide: UPF0213 protein SG0387 (107 aa).

Residues 4-79 form the GIY-YIG domain; it reads SLWHLYLIRT…KQLSRAQKEH (76 aa).

Belongs to the UPF0213 family.

The sequence is that of UPF0213 protein SG0387 from Sodalis glossinidius (strain morsitans).